Here is a 180-residue protein sequence, read N- to C-terminus: UPF0397 protein SSA_0592 (180 aa).

Helical transmembrane passes span Val9–Thr29, Leu45–Ile65, Gly72–Phe92, Leu113–Val133, and Ile146–Ala166.

It belongs to the UPF0397 family.

It is found in the cell membrane. In Streptococcus sanguinis (strain SK36), this protein is UPF0397 protein SSA_0592.